The following is a 273-amino-acid chain: Undecaprenyl-diphosphatase (273 aa).

8 consecutive transmembrane segments (helical) span residues 3 to 23 (IIELIKALILGLVEGATEFAP), 48 to 68 (GANTFKVVIQLGSVLAAVVVF), 89 to 109 (LTLMHIFVGLLPAGVLGVLFE), 116 to 136 (LFSTKTVLIGLVLGALLMIAA), 151 to 171 (ITYKQAFIVGLVQCLSLWPGF), 192 to 212 (ADFTFIMAVPIMAGASAISLL), 225 to 245 (FFVVGFISAFVFALLAIRFFL), and 253 to 273 (LVPFAIYRIVLAAVIYVVYFA).

This sequence belongs to the UppP family.

The protein resides in the cell membrane. The enzyme catalyses di-trans,octa-cis-undecaprenyl diphosphate + H2O = di-trans,octa-cis-undecaprenyl phosphate + phosphate + H(+). Functionally, catalyzes the dephosphorylation of undecaprenyl diphosphate (UPP). Confers resistance to bacitracin. The protein is Undecaprenyl-diphosphatase of Anoxybacillus flavithermus (strain DSM 21510 / WK1).